The sequence spans 260 residues: Ribosomal RNA small subunit methyltransferase J (260 aa).

Residues 108-109 (RD), 124-125 (ER), and Asp178 each bind S-adenosyl-L-methionine.

This sequence belongs to the methyltransferase superfamily. RsmJ family.

Its subcellular location is the cytoplasm. It catalyses the reaction guanosine(1516) in 16S rRNA + S-adenosyl-L-methionine = N(2)-methylguanosine(1516) in 16S rRNA + S-adenosyl-L-homocysteine + H(+). Its function is as follows. Specifically methylates the guanosine in position 1516 of 16S rRNA. This is Ribosomal RNA small subunit methyltransferase J from Ectopseudomonas mendocina (strain ymp) (Pseudomonas mendocina).